We begin with the raw amino-acid sequence, 374 residues long: MKFELDTTDGRARRGRLIFDRGTVETPAFMPVGTYGTVKGMTPEEVRATGADILLGNTFHLWLRPGEEIMRKHGDLHDFMNWQRPILTDSGGFQVFSLGDIRKITEEGVHFRSPINGEKIFLDPEKSMQIQDALGSDVVMIFDECTPYPATEDEARKSMQMSLRWAKRSRDEFDRLKNPNSLFGIIQGGVYEDLRDESLKGLVEIGFDGYAVGGLAVGEPKADMHRILEHICPQIPADKPRYLMGVGKPEDLVEGVRRGVDMFDCVMPTRNARNGHLFTSEGVIKIRNARHRDDTSPLDTKCDCYTCKNYSRAYLYHLDRCNEILGARLNTIHNLRYYQMLMEGLRGAIETGTLDAFVADFYTSQGREVPELVD.

Aspartate 89 serves as the catalytic Proton acceptor. Substrate-binding positions include 89 to 93 (DSGGF), aspartate 143, glutamine 187, and glycine 214. Residues 245-251 (GVGKPED) form an RNA binding region. Aspartate 264 functions as the Nucleophile in the catalytic mechanism. The RNA binding; important for wobble base 34 recognition stretch occupies residues 269-273 (TRNAR). Cysteine 302, cysteine 304, cysteine 307, and histidine 333 together coordinate Zn(2+).

This sequence belongs to the queuine tRNA-ribosyltransferase family. In terms of assembly, homodimer. Within each dimer, one monomer is responsible for RNA recognition and catalysis, while the other monomer binds to the replacement base PreQ1. Zn(2+) is required as a cofactor.

The catalysed reaction is 7-aminomethyl-7-carbaguanine + guanosine(34) in tRNA = 7-aminomethyl-7-carbaguanosine(34) in tRNA + guanine. Its pathway is tRNA modification; tRNA-queuosine biosynthesis. Catalyzes the base-exchange of a guanine (G) residue with the queuine precursor 7-aminomethyl-7-deazaguanine (PreQ1) at position 34 (anticodon wobble position) in tRNAs with GU(N) anticodons (tRNA-Asp, -Asn, -His and -Tyr). Catalysis occurs through a double-displacement mechanism. The nucleophile active site attacks the C1' of nucleotide 34 to detach the guanine base from the RNA, forming a covalent enzyme-RNA intermediate. The proton acceptor active site deprotonates the incoming PreQ1, allowing a nucleophilic attack on the C1' of the ribose to form the product. After dissociation, two additional enzymatic reactions on the tRNA convert PreQ1 to queuine (Q), resulting in the hypermodified nucleoside queuosine (7-(((4,5-cis-dihydroxy-2-cyclopenten-1-yl)amino)methyl)-7-deazaguanosine). The chain is Queuine tRNA-ribosyltransferase from Shewanella sp. (strain W3-18-1).